A 552-amino-acid polypeptide reads, in one-letter code: Elongator complex protein 3 (552 aa).

The 291-residue stretch at R84–P374 folds into the Radical SAM core domain. Residues C101, C111, and C114 each coordinate [4Fe-4S] cluster. Acetyl-CoA is bound by residues K166, E476–V479, F499–M501, and Y532. In terms of domain architecture, N-acetyltransferase spans T398 to N552.

This sequence belongs to the ELP3 family. In terms of assembly, component of the elongator complex composed of Elp1, Elp2, Elp3, Elp4, Elp5 and Elp6. The elongator complex associates with and stabilizes microtubules; efficient interaction requires the full complex. [4Fe-4S] cluster is required as a cofactor.

It is found in the cytoplasm. It localises to the nucleus. The protein localises to the cytoskeleton. The protein resides in the spindle. It catalyses the reaction uridine(34) in tRNA + acetyl-CoA + S-adenosyl-L-methionine + H2O = 5-(carboxymethyl)uridine(34) in tRNA + 5'-deoxyadenosine + L-methionine + CoA + 2 H(+). It participates in tRNA modification; 5-methoxycarbonylmethyl-2-thiouridine-tRNA biosynthesis. In terms of biological role, catalytic tRNA acetyltransferase subunit of the elongator complex, which is required for multiple tRNA modifications, including mcm5U (5-methoxycarbonylmethyl uridine), mcm5s2U (5-methoxycarbonylmethyl-2-thiouridine), and ncm5U (5-carbamoylmethyl uridine). In the elongator complex, acts as a tRNA uridine(34) acetyltransferase by mediating formation of carboxymethyluridine in the wobble base at position 34 in tRNAs. Binding by the elongator complex stabilizes microtubules and promotes their growth. This induces central spindle asymmetry, promoting polarized signaling endosome trafficking during asymmetric cell division and cell fate assignation of sensory organ precursor cells. Plays a role in the control of synaptic bouton expansion. Required for larval development. Involved in protein synthesis-dependent long-term memory formation, probably as part of the elongator complex. The chain is Elongator complex protein 3 from Drosophila melanogaster (Fruit fly).